Here is a 115-residue protein sequence, read N- to C-terminus: Large ribosomal subunit protein uL22c (115 aa).

The protein belongs to the universal ribosomal protein uL22 family. Part of the 50S ribosomal subunit.

The protein resides in the plastid. Its subcellular location is the chloroplast. Its function is as follows. This protein binds specifically to 23S rRNA. Functionally, the globular domain of the protein is located near the polypeptide exit tunnel on the outside of the subunit, while an extended beta-hairpin is found that lines the wall of the exit tunnel in the center of the 70S ribosome. This chain is Large ribosomal subunit protein uL22c (rpl22), found in Phaeodactylum tricornutum (strain CCAP 1055/1).